The following is a 244-amino-acid chain: Glucosamine-6-phosphate deaminase (244 aa).

Aspartate 67 (proton acceptor; for enolization step) is an active-site residue. Residue asparagine 136 is the For ring-opening step of the active site. Catalysis depends on histidine 138, which acts as the Proton acceptor; for ring-opening step. Glutamate 143 serves as the catalytic For ring-opening step.

It belongs to the glucosamine/galactosamine-6-phosphate isomerase family. NagB subfamily.

It catalyses the reaction alpha-D-glucosamine 6-phosphate + H2O = beta-D-fructose 6-phosphate + NH4(+). The protein operates within amino-sugar metabolism; N-acetylneuraminate degradation; D-fructose 6-phosphate from N-acetylneuraminate: step 5/5. Its function is as follows. Catalyzes the reversible isomerization-deamination of glucosamine 6-phosphate (GlcN6P) to form fructose 6-phosphate (Fru6P) and ammonium ion. The protein is Glucosamine-6-phosphate deaminase of Clostridium botulinum (strain Loch Maree / Type A3).